The following is a 520-amino-acid chain: ATP-dependent clpX-like chaperone, mitochondrial (520 aa).

The N-terminal 13 residues, 1–13 (MLKSASQNFFRAY), are a transit peptide targeting the mitochondrion. 140-147 (GPSGSGKT) lines the ATP pocket.

The protein belongs to the ClpX chaperone family. As to quaternary structure, homohexamer that forms a ring structure; this hexamerization requires ATP binding. Interacts with HEM1.

It is found in the mitochondrion inner membrane. Functionally, ATP-dependent unfoldase that stimulates the incorporation of the pyridoxal phosphate cofactor into 5-aminolevulinate synthase (HEM1), thereby activating 5-aminolevulinate (ALA) synthesis, the first step in heme biosynthesis. Up-regulates heme biosynthesis. This Saccharomyces cerevisiae (strain ATCC 204508 / S288c) (Baker's yeast) protein is ATP-dependent clpX-like chaperone, mitochondrial.